A 100-amino-acid chain; its full sequence is Small ribosomal subunit protein bS18c (100 aa).

The protein belongs to the bacterial ribosomal protein bS18 family. As to quaternary structure, part of the 30S ribosomal subunit.

Its subcellular location is the plastid. The protein resides in the chloroplast. The protein is Small ribosomal subunit protein bS18c of Pleurastrum terricola (Filamentous green alga).